Here is a 144-residue protein sequence, read N- to C-terminus: Transcriptional regulator SlyA (144 aa).

Residues 2-135 (ESPLGSDLAR…LIKLIAKLEH (134 aa)) form the HTH marR-type domain. The segment at residues 49–72 (QIQLAKAIGIEQPSLVRTLDQLED) is a DNA-binding region (H-T-H motif).

Belongs to the SlyA family. As to quaternary structure, homodimer.

The protein resides in the cytoplasm. Its function is as follows. Transcription regulator that can specifically activate or repress expression of target genes. Required for virulence and survival in the macrophage environment. Probably activates the transcription of ssrB. Independently of ssrB activation, capable of stimulating the expression of virulence genes found on pathogenicity island 2 (SPI2). Probably activates expression of ispA, xseB genes, and of omp operon. The polypeptide is Transcriptional regulator SlyA (Salmonella typhimurium (strain LT2 / SGSC1412 / ATCC 700720)).